The following is a 21-amino-acid chain: Dahlein-5.6 (21 aa).

Expressed by the skin dorsal glands.

The protein resides in the secreted. Has no antimicrobial activity. Strongly inhibits the formation of NO by neuronal nitric oxide synthase at micromolar concentrations. This is Dahlein-5.6 from Ranoidea dahlii (Dahl's aquatic frog).